The following is a 286-amino-acid chain: Meteorin-like protein (286 aa).

Residues 1 to 20 form the signal peptide; sequence MLRRGLLSFFMVILIDRGTS. 5 disulfide bridges follow: cysteine 28/cysteine 51, cysteine 84/cysteine 120, cysteine 165/cysteine 235, cysteine 168/cysteine 259, and cysteine 178/cysteine 281. Residue asparagine 203 is glycosylated (N-linked (GlcNAc...) asparagine).

Belongs to the meteorin family.

The protein localises to the secreted. In terms of biological role, hormone induced following exercise or cold exposure that promotes energy expenditure. Induced either in the skeletal muscle after exercise or in adipose tissue following cold exposure and is present in the circulation. Able to stimulate energy expenditure associated with the browning of the white fat depots and improves glucose tolerance. This Xenopus laevis (African clawed frog) protein is Meteorin-like protein (metrnl).